A 121-amino-acid polypeptide reads, in one-letter code: Small ribosomal subunit protein uS13 (121 aa).

Positions 93 to 121 are disordered; it reads RGLPVRGQNSKNNARTRKGPRRTVANKKK. Positions 106–121 are enriched in basic residues; that stretch reads ARTRKGPRRTVANKKK.

It belongs to the universal ribosomal protein uS13 family. Part of the 30S ribosomal subunit. Forms a loose heterodimer with protein S19. Forms two bridges to the 50S subunit in the 70S ribosome.

Its function is as follows. Located at the top of the head of the 30S subunit, it contacts several helices of the 16S rRNA. In the 70S ribosome it contacts the 23S rRNA (bridge B1a) and protein L5 of the 50S subunit (bridge B1b), connecting the 2 subunits; these bridges are implicated in subunit movement. Contacts the tRNAs in the A and P-sites. The polypeptide is Small ribosomal subunit protein uS13 (Bacillus subtilis (strain 168)).